We begin with the raw amino-acid sequence, 750 residues long: Rho GTPase-activating protein 9 (750 aa).

In terms of domain architecture, SH3 spans 22-88; sequence PRGSQLCALY…PAAYMIEESI (67 aa). Disordered stretches follow at residues 120–187 and 242–319; these read ALPS…LMSE and WKPP…LLDD. Polar residues predominate over residues 163–180; the sequence is RSLSQEDLPSEASASTAG. Residues 213–247 enclose the WW domain; the sequence is LQRLDAWEQHLDPNSGRCFYINSLTGCKSWKPPRR. Composition is skewed to polar residues over residues 251 to 270 and 291 to 300; these read ETNP…NDVL and GSLSLSQRTS. Positions 301–317 are enriched in low complexity; sequence QLDPPALQAPRPLPQLL. One can recognise a PH domain in the interval 322 to 435; it reads EVEKSGLLNM…WHRALRTVIE (114 aa). Lipid binding stretches follow at residues 342–345, 397–399, and 432–669; these read RKNW, SSR, and TVIE…CLSQ. A compositionally biased stretch (basic and acidic residues) spans 446-462; sequence EAPTGRDQGSGDRENPL. The interval 446 to 488 is disordered; that stretch reads EAPTGRDQGSGDRENPLELRLSGSGPAELSAGEDEEEESELVS. Ser475 is subject to Phosphoserine. Acidic residues predominate over residues 476–485; it reads AGEDEEEESE. Ser500 bears the Phosphoserine mark. The region spanning 542–749 is the Rho-GAP domain; sequence CQLESLCQRE…LMLTNFTSLF (208 aa).

Interacts with FASLG. Predominantly expressed in peripheral blood leukocytes, spleen, and thymus.

In terms of biological role, GTPase activator for the Rho-type GTPases by converting them to an inactive GDP-bound state. Has a substantial GAP activity toward CDC42 and RAC1 and less toward RHOA. Has a role in regulating adhesion of hematopoietic cells to the extracellular matrix. Binds phosphoinositides, and has the highest affinity for phosphatidylinositol 3,4,5-trisphosphate, followed by phosphatidylinositol 3,4-bisphosphate and phosphatidylinositol 4,5-bisphosphate. The polypeptide is Rho GTPase-activating protein 9 (ARHGAP9) (Homo sapiens (Human)).